Reading from the N-terminus, the 151-residue chain is MAKVQFTKRQETSQIFVHCSATKATMDVGVREIRQWHKEQGWLDVGYHFIIRRDGTVEAGRDQDAVGSHVKGYNSTSVGVCLVGGIDAKGNPEANFTPAQMQALRSLLVELKVQYTGAVLMAHHDVAPKACPSFDLKRWWEKNELVTSDHG.

Zn(2+)-binding residues include His18, His123, and Cys131.

This sequence belongs to the N-acetylmuramoyl-L-alanine amidase 2 family. In terms of assembly, interacts with the viral RNA polymerase. Zn(2+) is required as a cofactor.

Its subcellular location is the host cytoplasm. It catalyses the reaction Hydrolyzes the link between N-acetylmuramoyl residues and L-amino acid residues in certain cell-wall glycopeptides.. Its activity is regulated as follows. Binding to the viral RNA polymerase inhibits amidase activity. Its function is as follows. Endolysin with amidase activity that degrades host peptidoglycans and participates with the holin and spanin proteins in the sequential events which lead to the programmed host cell lysis releasing the mature viral particles. Once the holin has permeabilized the host cell membrane, the endolysin can reach the periplasm and breaking down the peptidoglycan layer. Functionally, plays an important role in the switch between viral transcription and genome replication. Once produced in sufficient amount, interacts with and inhibits the viral RNA polymerase that becomes unable to produce additional late transcripts. This lysozyme-polymerase complex in turn plays an active role in viral genome replication and packaging. The sequence is that of Endolysin from Klebsiella pneumoniae (Bacteriophage KP32).